We begin with the raw amino-acid sequence, 243 residues long: MLPLWIALQFLGSLPIRLPGMPTPEQLGRSLLFYPLVGLLFGVILWALNIALAGTPLLLHAALLLAVWVLLSGALHLDGLADSADAWLGGFGDRERTLTIMKDPRSGPIAVVTLVLVLLLKFAALLALIEQQQSMALIIVPLIGRAALLGLFLTTSYVRAGGLGQALADHLPRKTGWQVLAVSAAVCLVIAGFNAVVALLLAVIVFIWLRHLMVRRLGGTTGDTAGALLELLEMSVLVGLALF.

5 helical membrane-spanning segments follow: residues L31–A51, L57–L77, I109–I129, M135–T155, and L188–W208.

The protein belongs to the CobS family. Mg(2+) serves as cofactor.

The protein localises to the cell inner membrane. The enzyme catalyses alpha-ribazole + adenosylcob(III)inamide-GDP = adenosylcob(III)alamin + GMP + H(+). It catalyses the reaction alpha-ribazole 5'-phosphate + adenosylcob(III)inamide-GDP = adenosylcob(III)alamin 5'-phosphate + GMP + H(+). It participates in cofactor biosynthesis; adenosylcobalamin biosynthesis; adenosylcobalamin from cob(II)yrinate a,c-diamide: step 7/7. In terms of biological role, joins adenosylcobinamide-GDP and alpha-ribazole to generate adenosylcobalamin (Ado-cobalamin). Also synthesizes adenosylcobalamin 5'-phosphate from adenosylcobinamide-GDP and alpha-ribazole 5'-phosphate. The protein is Adenosylcobinamide-GDP ribazoletransferase of Pseudomonas fluorescens (strain Pf0-1).